A 429-amino-acid polypeptide reads, in one-letter code: Enolase (429 aa).

Q163 is a binding site for (2R)-2-phosphoglycerate. E205 (proton donor) is an active-site residue. Mg(2+)-binding residues include D242, E287, and D314. K339, R368, S369, and K390 together coordinate (2R)-2-phosphoglycerate. The active-site Proton acceptor is K339.

This sequence belongs to the enolase family. The cofactor is Mg(2+).

The protein resides in the cytoplasm. It is found in the secreted. The protein localises to the cell surface. The enzyme catalyses (2R)-2-phosphoglycerate = phosphoenolpyruvate + H2O. It participates in carbohydrate degradation; glycolysis; pyruvate from D-glyceraldehyde 3-phosphate: step 4/5. In terms of biological role, catalyzes the reversible conversion of 2-phosphoglycerate (2-PG) into phosphoenolpyruvate (PEP). It is essential for the degradation of carbohydrates via glycolysis. This Anaeromyxobacter dehalogenans (strain 2CP-1 / ATCC BAA-258) protein is Enolase.